The chain runs to 319 residues: D-alanine--D-alanine ligase (319 aa).

Residues 109–313 enclose the ATP-grasp domain; it reads KRVWLAEGLP…YEQLCLHILQ (205 aa). An ATP-binding site is contributed by 139–194; it reads PDDLGLPLIVKPPREGSSIGVTKVLGYSQMQDAVALSARHDPDVLCEEFIDGAEVT. Asp-266, Glu-280, and Asn-282 together coordinate Mg(2+).

This sequence belongs to the D-alanine--D-alanine ligase family. Mg(2+) is required as a cofactor. It depends on Mn(2+) as a cofactor.

The protein resides in the cytoplasm. The catalysed reaction is 2 D-alanine + ATP = D-alanyl-D-alanine + ADP + phosphate + H(+). It functions in the pathway cell wall biogenesis; peptidoglycan biosynthesis. Cell wall formation. This chain is D-alanine--D-alanine ligase, found in Methylibium petroleiphilum (strain ATCC BAA-1232 / LMG 22953 / PM1).